Reading from the N-terminus, the 628-residue chain is Choline transporter-like protein 2 (628 aa).

Residues 1–31 lie on the Cytoplasmic side of the membrane; the sequence is MSSEDLQDHHEIGNEVIKKKGVYTKKKCQDC. Residues 32 to 52 traverse the membrane as a helical segment; it reads FFLILFLLFWAGMIVVAAFGV. Residues 53-204 lie on the Extracellular side of the membrane; that stretch reads KNGKPDRIVK…EILTDLTNSW (152 aa). Asparagine 82, asparagine 118, asparagine 146, and asparagine 168 each carry an N-linked (GlcNAc...) asparagine glycan. The helical transmembrane segment at 205–225 threads the bilayer; sequence RYLIYGALIAMGLGLTWIFLL. Arginine 226 is a topological domain (cytoplasmic). A helical membrane pass occupies residues 227 to 247; the sequence is FFAGFITWLTVFAAYACLGLL. At 248–282 the chain is on the extracellular side; the sequence is TAQVYFQWQDSKDAYENTIPSQRLVMQEKNILALK. A helical transmembrane segment spans residues 283-303; sequence VIFIILCVVCGIFALILLALF. Topologically, residues 304–319 are cytoplasmic; that stretch reads SRIRIAIRIIKECSRA. Residues 320-340 traverse the membrane as a helical segment; the sequence is IGIMPSIFFFPIFIFLLLCGF. Topologically, residues 341-381 are extracellular; sequence TVYWVYIGVYLATAGSPTYDDQYRFTGYEADSKLQKIQIYH. The helical transmembrane segment at 382 to 402 threads the bilayer; that stretch reads FFGYLWTFAFILALNQTTIAG. The Cytoplasmic segment spans residues 403-432; sequence AISSWYWVQDKKDTPFFPVWSSFFRVIRYH. A helical membrane pass occupies residues 433-453; sequence LGSIALGSLILAIVQFIRWVL. The Extracellular segment spans residues 454 to 530; sequence RFLEKKFKGK…RVAAVNLVSS (77 aa). A helical transmembrane segment spans residues 531–551; that stretch reads FLMFLGRVFITAATVGISLYL. Residues 552 to 559 are Cytoplasmic-facing; that stretch reads LKEHENLS. Residues 560 to 580 form a helical membrane-spanning segment; sequence FYIIPVILIGFIAFAISTGFM. The Extracellular segment spans residues 581 to 628; that stretch reads SVYDMSIDTMLLCFCEDCERNDGSPERPYYMSKSLRKFVDGKGRSKCC.

This sequence belongs to the CTL (choline transporter-like) family.

It is found in the cell membrane. The protein localises to the mitochondrion outer membrane. The catalysed reaction is choline(out) + n H(+)(in) = choline(in) + n H(+)(out). The enzyme catalyses ethanolamine(out) + n H(+)(in) = ethanolamine(in) + n H(+)(out). In terms of biological role, choline/H+ antiporter, mainly in mitochodria. Also acts as a low-affinity ethanolamine/H+ antiporter, regulating the supply of extracellular ethanolamine (Etn) for the CDP-Etn pathway, redistribute intracellular Etn and balance the CDP-Cho and CDP-Etn arms of the Kennedy pathway. This is Choline transporter-like protein 2 (slc44a2) from Dictyostelium discoideum (Social amoeba).